The sequence spans 73 residues: Maltose-binding periplasmic protein (73 aa).

The N-terminal stretch at 1-30 (MMTKTNLKMGARTLALSVLATLVLSASALA) is a signal peptide.

It belongs to the bacterial solute-binding protein 1 family.

The protein localises to the periplasm. In terms of biological role, involved in the high-affinity maltose membrane transport system. Initial receptor for the active transport of and chemotaxis toward maltooligosaccharides. This Photorhabdus luminescens (Xenorhabdus luminescens) protein is Maltose-binding periplasmic protein (malE).